We begin with the raw amino-acid sequence, 347 residues long: Ryncolin-3 (347 aa).

The first 19 residues, methionine 1–glycine 19, serve as a signal peptide directing secretion. In terms of domain architecture, Collagen-like spans glycine 57–glycine 114. The interval proline 62 to aspartate 115 is disordered. Residues lysine 95 to aspartate 115 are compositionally biased toward basic and acidic residues. The 221-residue stretch at aspartate 121–glutamine 341 folds into the Fibrinogen C-terminal domain. Cystine bridges form between cysteine 132–cysteine 160 and cysteine 284–cysteine 297.

It belongs to the ficolin lectin family. Veficolin subfamily. In terms of processing, hydroxylated. In terms of tissue distribution, expressed by the venom duct.

The protein resides in the secreted. Functionally, initiates complement activation and/or interferes in platelet aggregation and/or blood coagulation. The polypeptide is Ryncolin-3 (Cerberus rynchops (Dog-faced water snake)).